The primary structure comprises 282 residues: Pantothenate synthetase (282 aa).

30 to 37 contributes to the ATP binding site; it reads MGALHAGH. The Proton donor role is filled by histidine 37. Glutamine 61 is a (R)-pantoate binding site. Glutamine 61 contacts beta-alanine. 147-150 serves as a coordination point for ATP; sequence GEKD. Glutamine 153 contacts (R)-pantoate. ATP-binding positions include valine 176 and 184–187; that span reads LSSR.

This sequence belongs to the pantothenate synthetase family. Homodimer.

The protein resides in the cytoplasm. It catalyses the reaction (R)-pantoate + beta-alanine + ATP = (R)-pantothenate + AMP + diphosphate + H(+). It functions in the pathway cofactor biosynthesis; (R)-pantothenate biosynthesis; (R)-pantothenate from (R)-pantoate and beta-alanine: step 1/1. Functionally, catalyzes the condensation of pantoate with beta-alanine in an ATP-dependent reaction via a pantoyl-adenylate intermediate. This Bacteroides fragilis (strain ATCC 25285 / DSM 2151 / CCUG 4856 / JCM 11019 / LMG 10263 / NCTC 9343 / Onslow / VPI 2553 / EN-2) protein is Pantothenate synthetase.